Consider the following 413-residue polypeptide: Clamp protein VP6 (413 aa).

Belongs to the reoviridae clamp protein family. Interacts with capsid proteins VP3, VP4 and VP7.

Its subcellular location is the virion. In terms of biological role, located at the interface of the incomplete T=13 outer capsid and the pseudo T=2 inner capsid, 120 VP6 subunits clamp and stabilize the inner capsid shell. This Ctenopharyngodon idella (Grass carp) protein is Clamp protein VP6 (S8).